The following is an 80-amino-acid chain: LSM complex subunit lsm5 (80 aa).

The region spanning Leu6–Pro79 is the Sm domain.

The protein belongs to the snRNP Sm proteins family. In terms of assembly, component of the heptameric LSM1-LSM7 complex that forms a seven-membered ring structure with a donut shape. The LSm subunits are arranged in the order lsm1, lsm2, lsm3, lsm6, lsm5, lsm7 and lsm4. Component of the heptameric LSM2-LSM8 complex that forms a seven-membered ring structure with a donut shape. The LSm subunits are arranged in the order lsm8, lsm2, lsm3, lsm6, lsm5, lsm7 and lsm4.

The protein localises to the nucleus. Component of LSm protein complexes, which are involved in RNA processing and may function in a chaperone-like manner. Component of the cytoplasmic LSM1-LSM7 complex which is involved in mRNA degradation by activating the decapping step. The LSM1-LSM7 complex loads onto the 3'-end of single stranded RNA. Component of the nuclear LSM2-LSM8 complex, which is involved in spliceosome assembly. The LSM2-LSM8 complex plays a role in the biogenesis of the spliceosomal U4/U6-U5 tri-snRNP complex by accelerating prp24-mediated annealing of U4/U6 di-snRNA. The LSM2-LSM8 complex binds U6 snRNA terminating with a cyclic 2',3' phosphate group; RNA with an unmodified 3' hydroxyl or non-cyclic 3' phosphate is bound less tightly. The sequence is that of LSM complex subunit lsm5 (lsm5) from Schizosaccharomyces pombe (strain 972 / ATCC 24843) (Fission yeast).